A 959-amino-acid polypeptide reads, in one-letter code: Ribonucleoside-diphosphate reductase large subunit (959 aa).

Substrate-binding positions include Thr68, 83 to 84, and Gly112; that span reads SC. The cysteines at positions 84 and 626 are disulfide-linked. Asn270 (proton acceptor) is an active-site residue. A DOD-type homing endonuclease domain is found at 378-508; it reads LPTLFGNSEH…IQLLLIGMGV (131 aa). Cys611 (cysteine radical intermediate) is an active-site residue. Glu613 functions as the Proton acceptor in the catalytic mechanism. 751 to 755 is a binding site for substrate; that stretch reads PTATS.

This sequence belongs to the ribonucleoside diphosphate reductase large chain family. In terms of assembly, heterotetramer composed of a homodimer of the large subunit (R1) and a homodimer of the small subunit (R2). Larger multisubunit protein complex are also active, composed of (R1)n(R2)n.

The enzyme catalyses a 2'-deoxyribonucleoside 5'-diphosphate + [thioredoxin]-disulfide + H2O = a ribonucleoside 5'-diphosphate + [thioredoxin]-dithiol. Its activity is regulated as follows. Under complex allosteric control mediated by deoxynucleoside triphosphates and ATP binding. The type of nucleotide bound at the specificity site determines substrate preference. It seems probable that ATP makes the enzyme reduce CDP and UDP, dGTP favors ADP reduction and dTTP favors GDP reduction. Functionally, ribonucleoside-diphosphate reductase holoenzyme provides the precursors necessary for viral DNA synthesis. Allows virus growth in non-dividing cells. Catalyzes the biosynthesis of deoxyribonucleotides from the corresponding ribonucleotides. This is Ribonucleoside-diphosphate reductase large subunit from Acheta domesticus (House cricket).